A 545-amino-acid polypeptide reads, in one-letter code: Probable protein kinase UbiB (545 aa).

The Protein kinase domain maps to 123-501; sequence DFEPIALASA…QIKQRQSQYL (379 aa). Residues 129-137 and lysine 152 contribute to the ATP site; that span reads LASASIAQV. Catalysis depends on aspartate 287, which acts as the Proton acceptor. A helical membrane pass occupies residues 508-528; that stretch reads LFLCGSLFLLSGLANIPWLFI.

The protein belongs to the ABC1 family. UbiB subfamily.

It is found in the cell inner membrane. Its pathway is cofactor biosynthesis; ubiquinone biosynthesis [regulation]. Is probably a protein kinase regulator of UbiI activity which is involved in aerobic coenzyme Q (ubiquinone) biosynthesis. In Photorhabdus laumondii subsp. laumondii (strain DSM 15139 / CIP 105565 / TT01) (Photorhabdus luminescens subsp. laumondii), this protein is Probable protein kinase UbiB.